A 267-amino-acid chain; its full sequence is Phosphatidylglycerol--prolipoprotein diacylglyceryl transferase (267 aa).

Transmembrane regions (helical) follow at residues L17–A37, L56–Y76, I91–L111, L120–L140, Q173–A193, M199–F219, and M236–M256. R139 lines the a 1,2-diacyl-sn-glycero-3-phospho-(1'-sn-glycerol) pocket.

It belongs to the Lgt family.

It localises to the cell inner membrane. It catalyses the reaction L-cysteinyl-[prolipoprotein] + a 1,2-diacyl-sn-glycero-3-phospho-(1'-sn-glycerol) = an S-1,2-diacyl-sn-glyceryl-L-cysteinyl-[prolipoprotein] + sn-glycerol 1-phosphate + H(+). It functions in the pathway protein modification; lipoprotein biosynthesis (diacylglyceryl transfer). Catalyzes the transfer of the diacylglyceryl group from phosphatidylglycerol to the sulfhydryl group of the N-terminal cysteine of a prolipoprotein, the first step in the formation of mature lipoproteins. The protein is Phosphatidylglycerol--prolipoprotein diacylglyceryl transferase of Oleidesulfovibrio alaskensis (strain ATCC BAA-1058 / DSM 17464 / G20) (Desulfovibrio alaskensis).